We begin with the raw amino-acid sequence, 348 residues long: Ion-translocating oxidoreductase complex subunit D (348 aa).

Helical transmembrane passes span 15–35, 36–56, 67–87, 88–108, and 125–145; these read LTAKFMLWVMVAMLPALGMQA, YFFGYGVFIQVFIALLLAVAI, PTAFYVADLSGVLTALILAIS, IPPYAPYWIIVIGIIVALLLA, and VAYALLLVSFPVQMTGWLVPI. Thr-186 carries the post-translational modification FMN phosphoryl threonine. The next 5 helical transmembrane spans lie at 212–232, 241–261, 265–285, 298–318, and 320–340; these read LFANGWWQINLAFLAGGLLLI, IPAAMLGMFALLSGLTDLLLP, LNVVSQLFSGAMMFGAFFIAT, LIFGGLIGLFVYLIRYYGNYP, and AVAFSVLLANICVPLIDHYTQ.

It belongs to the NqrB/RnfD family. As to quaternary structure, the complex is composed of six subunits: RnfA, RnfB, RnfC, RnfD, RnfE and RnfG. FMN serves as cofactor.

It localises to the cell inner membrane. Its function is as follows. Part of a membrane-bound complex that couples electron transfer with translocation of ions across the membrane. The chain is Ion-translocating oxidoreductase complex subunit D from Actinobacillus pleuropneumoniae serotype 5b (strain L20).